A 227-amino-acid chain; its full sequence is 2-C-methyl-D-erythritol 4-phosphate cytidylyltransferase (227 aa).

It belongs to the IspD/TarI cytidylyltransferase family. IspD subfamily.

The enzyme catalyses 2-C-methyl-D-erythritol 4-phosphate + CTP + H(+) = 4-CDP-2-C-methyl-D-erythritol + diphosphate. Its pathway is isoprenoid biosynthesis; isopentenyl diphosphate biosynthesis via DXP pathway; isopentenyl diphosphate from 1-deoxy-D-xylulose 5-phosphate: step 2/6. Functionally, catalyzes the formation of 4-diphosphocytidyl-2-C-methyl-D-erythritol from CTP and 2-C-methyl-D-erythritol 4-phosphate (MEP). The polypeptide is 2-C-methyl-D-erythritol 4-phosphate cytidylyltransferase (Thermosipho melanesiensis (strain DSM 12029 / CIP 104789 / BI429)).